A 232-amino-acid chain; its full sequence is Putative caffeoyl-CoA O-methyltransferase At1g67980 (232 aa).

Lys-8 lines the substrate pocket. S-adenosyl-L-methionine-binding positions include Val-52, Glu-74, 76–77 (GV), Ser-82, and Asp-100. Asp-149 is a binding site for substrate. Residue Asp-149 participates in a divalent metal cation binding. Residue Asp-151 coordinates S-adenosyl-L-methionine. Residues Asp-175 and Asn-176 each contribute to the a divalent metal cation site.

This sequence belongs to the class I-like SAM-binding methyltransferase superfamily. Cation-dependent O-methyltransferase family. CCoAMT subfamily. A divalent metal cation serves as cofactor.

It carries out the reaction (E)-caffeoyl-CoA + S-adenosyl-L-methionine = (E)-feruloyl-CoA + S-adenosyl-L-homocysteine + H(+). It participates in aromatic compound metabolism; phenylpropanoid biosynthesis. Methylates caffeoyl-CoA to feruloyl-CoA and 5-hydroxyferuloyl-CoA to sinapoyl-CoA. Plays a role in the synthesis of feruloylated polysaccharides. Involved in the reinforcement of the plant cell wall. Also involved in the responding to wounding or pathogen challenge by the increased formation of cell wall-bound ferulic acid polymers. In Arabidopsis thaliana (Mouse-ear cress), this protein is Putative caffeoyl-CoA O-methyltransferase At1g67980.